Reading from the N-terminus, the 22-residue chain is Mu-conotoxin CnIIIC (22 aa).

Gln-1 carries the pyrrolidone carboxylic acid; partial modification. Disulfide bonds link Cys-3–Cys-15, Cys-4–Cys-21, and Cys-10–Cys-22. Cys-22 is modified (cysteine amide).

Belongs to the conotoxin M superfamily. As to expression, expressed by the venom duct.

It localises to the secreted. Mu-conotoxins block voltage-gated sodium channels (Nav). This synthetic toxin blocks both voltage-gated sodium channels and nicotinic acetylcholine receptor (nAChR). Inhibits the skeletal muscle rNav1.4/SCN4A (IC(50)=1.3 nM) and the brain rNav1.2/SCN2A in a long-lasting manner. A low inhibition is also observed on neuronal mNav1.6/SCN8A and mNav1.7/SCN9A. Modestly blocks nAChR alpha-3/beta-2 subtype (IC(50)=450 nM) (partially reversible) and, to a lesser extent, alpha-7 and alpha-4/beta-2 subtypes (reversible). In vitro, decreases twitch tension in mouse hemidiaphragms (IC(50)=150 nM), and displays a high blocking effect in mouse extensor digitorum longus muscles (IC(50)=46 nM). The sequence is that of Mu-conotoxin CnIIIC from Conus consors (Singed cone).